Reading from the N-terminus, the 240-residue chain is Vesicle-associated membrane protein 727 (240 aa).

The Cytoplasmic portion of the chain corresponds to 1-215 (MSQKGLIYSF…MWLQSLQMKL (215 aa)). The 128-residue stretch at 6 to 133 (LIYSFVAKGT…NLDREFGPIL (128 aa)) folds into the Longin domain. The v-SNARE coiled-coil homology domain maps to 149 to 209 (KLSKLKAQIT…RQLRRKMWLQ (61 aa)). A helical; Anchor for type IV membrane protein transmembrane segment spans residues 216-236 (MVAGAVFSFILIVWVVACGGF). Residues 237-240 (KCSS) lie on the Vesicular side of the membrane.

Belongs to the synaptobrevin family. In terms of assembly, interacts with subunits of the class C core vacuole/endosome tethering (CORVET) complex including VPS11, VCL1, VPS18, VPS33, VPS3 and VPS8. In terms of tissue distribution, highly expressed in flowers. Detected in leaves, stems and roots.

The protein resides in the early endosome membrane. The protein localises to the endosome membrane. Its function is as follows. Involved in the targeting and/or fusion of transport vesicles to their target membrane. In Arabidopsis thaliana (Mouse-ear cress), this protein is Vesicle-associated membrane protein 727 (VAMP727).